The sequence spans 581 residues: Arginine--tRNA ligase (581 aa).

Residues 131-141 (ANPTGPLHVGH) carry the 'HIGH' region motif.

Belongs to the class-I aminoacyl-tRNA synthetase family. In terms of assembly, monomer.

The protein resides in the cytoplasm. The enzyme catalyses tRNA(Arg) + L-arginine + ATP = L-arginyl-tRNA(Arg) + AMP + diphosphate. In Ruegeria pomeroyi (strain ATCC 700808 / DSM 15171 / DSS-3) (Silicibacter pomeroyi), this protein is Arginine--tRNA ligase.